The sequence spans 445 residues: MDIRQVRETVEMIEEQHFDIRTITMGISLLDCIDSDIDRAAAKIYQKITTKAANLVAVGDDIAAELGIPIVNKRVSVTPIALIGAATDAEDYLSLAKALDQAACDIGVDFIGGFSALVQKGYQKGDKILIESIPQALAQTQKVCASVNVGSTRSGINMTAVADMGRIIKETAKASEIGAAKLVVFANAVEDNPFMAGAFHGVGEADTVINVGVSGPGVVKRALEKVRGESFDVLAETVKKTAFKITRIGQLVGQMASERLGVGFGVVDLSLAPTPAVGDSVARVLEEMGLEIVGTHGTTAALALLNDAVKKGGVMACNRVGGLSGAFIPVSEDEGMIAAVQGGSLNLEKLEAMTAICSVGLDMIAIPEETPSETIAAMIADEAAIGVINQKTTAVRIIPKGKEGDMIAFGGLLGTAPVMAVNPHSSADFIARGGQIPAPIHSFKN.

This sequence belongs to the UPF0210 family. As to quaternary structure, homodimer.

The chain is UPF0210 protein SEQ_0468 from Streptococcus equi subsp. equi (strain 4047).